The chain runs to 838 residues: MAQTAVGDLVVNLDVNSTKFNEQLSYVKKELKQTGNTANDEALRIQQSFSRQENAARKAGISVGQYNAAMRMLPAQFTDVATQLAGGQNPWLILLQQGGQVKDSFGGIIPTFRALLGTISPLMVGIGALSVATGALFYAWYQGSSTLSDFNKTLVLSGNTAGLTADRMLALARNGQAAGLTFNQTSEALTELINAGVRTGSRFDEMSQAVARFTDASGVPVEKVAAAYGKLATDPTSGLIAMAQQFHNVTAEQIAHVAQLQRAGDEAGALQAANEAATAGFNDQTKAIRDNMGTIESSADSLKRAFKSMWDAALDIGRPDTAQEMVAKAEAAFKKADEIWNLRKGDRYVNDEARARFWNDRETARLALDMAQQQAGIARANEENASREAAAESDRQKYAAQAQANYAKTQTALEKYTARQSELNKALKEGRILQADYNINLAAAKKEYEDTLKKPKKTPAIRTPAGARATDTASAQTLELQAQLRTLQEHKSINDTISQQRQELWRQQSRFTVLEEAAKTRTLSAEEKSLLASKSEVLSRAELNAKLGDQIVAQERLNRLQDTSQKYVTQIGEKTRALAESAGMSSRAAQRRNEEAQLLQGWKNGGGSENDAGYQNELQALQAYYAEQDKLRDDWQSGAKSAWADYVDSASDAYGQMKSFATSTFDGIGQNMADMLTRGKADWADFTRSTLSMLTQILLKQAMVGLVDSATTALGFAGGGYTGSGGKYEPAGVVHRGEFVFTKEATNRIGVGNLYRMMKGYATGGYVGGGGTGPAAAPFGVSVYAPVTVENASGNAQQQNDGDRLGKAYQQVINKSVNDGIARAIQPGGLIWNATNRR.

The interval 378–397 (ARANEENASREAAAESDRQK) is disordered. Basic and acidic residues predominate over residues 380-397 (ANEENASREAAAESDRQK). Residues 399 to 419 (AAQAQANYAKTQTALEKYTAR) are a coiled coil.

This sequence belongs to the Lambdavirus tape measure protein family. As to quaternary structure, interacts with the tail initiator complex presumably through its C-terminus domain. Interacts with the tail assembly proteins.

Its subcellular location is the virion. Its function is as follows. Serves as a ruler that controls the length of tail by stopping the tail tube polymerization and is probably released from the tail shaft during infection to facilitate DNA translocation into the host cell. Assembles into a multimeric linear form probably arranged as a coil of alpha-helices and stabilized by the covering tail assembly proteins. Its C-terminus fixes the tail tip complex, thereby forming the tail assembly initiator complex. Tail tube proteins polymerize around the tape measure protein, displacing the tail assembly proteins. When the tail reaches the length specified by the tape measure protein, it stops and becomes capped by the tail terminator protein. This chain is Tape measure protein, found in Escherichia coli (Bacteriophage N15).